The primary structure comprises 208 residues: GTP cyclohydrolase-2 (208 aa).

49–53 (RLHSE) contributes to the GTP binding site. Residues cysteine 54, cysteine 65, and cysteine 67 each contribute to the Zn(2+) site. Residues glutamine 70, 92-94 (EGR), and threonine 114 contribute to the GTP site. The active-site Proton acceptor is the aspartate 126. Arginine 128 functions as the Nucleophile in the catalytic mechanism. Residues threonine 149 and lysine 154 each contribute to the GTP site.

Belongs to the GTP cyclohydrolase II family. Zn(2+) serves as cofactor.

The catalysed reaction is GTP + 4 H2O = 2,5-diamino-6-hydroxy-4-(5-phosphoribosylamino)-pyrimidine + formate + 2 phosphate + 3 H(+). It functions in the pathway cofactor biosynthesis; riboflavin biosynthesis; 5-amino-6-(D-ribitylamino)uracil from GTP: step 1/4. In terms of biological role, catalyzes the conversion of GTP to 2,5-diamino-6-ribosylamino-4(3H)-pyrimidinone 5'-phosphate (DARP), formate and pyrophosphate. This is GTP cyclohydrolase-2 from Azotobacter vinelandii (strain DJ / ATCC BAA-1303).